Reading from the N-terminus, the 244-residue chain is Transcriptional regulatory protein AruR (244 aa).

One can recognise a Response regulatory domain in the interval 6–124 (RVLVVDDDPV…ELVSRAKNLI (119 aa)). 4-aspartylphosphate is present on aspartate 60. The segment at residues 139 to 239 (QALRQFGDWL…IHGAGYLFTA (101 aa)) is a DNA-binding region (ompR/PhoB-type).

In terms of processing, phosphorylated by AruS.

Its subcellular location is the cytoplasm. It participates in amino-acid degradation; L-arginine degradation [regulation]. Member of the two-component regulatory system AruS/AruR, which is involved in the regulation of the arginine transaminase (ATA) pathway in response to exogeneous L-arginine. Regulates transcription of aruH and aruI. This Pseudomonas aeruginosa (strain ATCC 15692 / DSM 22644 / CIP 104116 / JCM 14847 / LMG 12228 / 1C / PRS 101 / PAO1) protein is Transcriptional regulatory protein AruR (aruR).